Consider the following 466-residue polypeptide: Gastric inhibitory polypeptide receptor (466 aa).

The signal sequence occupies residues 1–21; it reads MTTSPILQLLLRLSLCGLLLQ. At 22 to 138 the chain is on the extracellular side; the sequence is RAETGSKGQT…DQRLILERLQ (117 aa). Disulfide bonds link cysteine 46-cysteine 70, cysteine 61-cysteine 103, and cysteine 84-cysteine 118. Residues asparagine 62 and asparagine 77 are each glycosylated (N-linked (GlcNAc...) asparagine). A helical membrane pass occupies residues 139-161; that stretch reads VMYTVGYSLSLATLLLALLILSL. Residues 162-169 are Cytoplasmic-facing; that stretch reads FRRLHCTR. Residues 170–189 form a helical membrane-spanning segment; sequence NYIHINLFTSFMLRAAAILS. Topologically, residues 190–217 are extracellular; sequence RDRLLPRPGPYLGDQALALWNQALAACR. Residues 218–242 form a helical membrane-spanning segment; it reads TAQIVTQYCVGANYTWLLVEGVYLH. Residues 243–254 are Cytoplasmic-facing; that stretch reads SLLVLVGGSEEG. Residues 255–278 form a helical membrane-spanning segment; that stretch reads HFRYYLLLGWGAPALFVIPWVIVR. Topologically, residues 279-293 are extracellular; the sequence is YLYENTQCWERNEVK. Residues 294–319 traverse the membrane as a helical segment; it reads AIWWIIRTPILMTILINFLIFIRILG. Over 320-341 the chain is Cytoplasmic; it reads ILLSKLRTRQMRCRDYRLRLAR. The chain crosses the membrane as a helical span at residues 342–362; the sequence is STLTLVPLLGVHEVVFAPVTE. Over 363–377 the chain is Extracellular; sequence EQARGALRFAKLGFE. Residues 378–398 form a helical membrane-spanning segment; sequence IFLSSFQGFLVSVLYCFINKE. The Cytoplasmic portion of the chain corresponds to 399–466; sequence VQSEIRRGWH…EASRELESYC (68 aa). Residues 427 to 466 are disordered; sequence AFRALPSGSGPGEVPTSRGLSSGTLPGPGNEASRELESYC.

Belongs to the G-protein coupled receptor 2 family. May form homodimers and heterodimers with GLP1R. Post-translationally, N-glycosylation is required for cell surface expression and lengthens receptor half-life by preventing degradation in the ER.

The protein resides in the cell membrane. Its function is as follows. This is a receptor for GIP. The activity of this receptor is mediated by G proteins which activate adenylyl cyclase. This chain is Gastric inhibitory polypeptide receptor (GIPR), found in Homo sapiens (Human).